The sequence spans 395 residues: Xylose isomerase (395 aa).

Residues histidine 54 and aspartate 57 contribute to the active site. 7 residues coordinate Mg(2+): glutamate 181, glutamate 217, histidine 220, aspartate 245, aspartate 255, aspartate 257, and aspartate 293.

Belongs to the xylose isomerase family. As to quaternary structure, homotetramer. Requires Mg(2+) as cofactor.

The protein localises to the cytoplasm. It catalyses the reaction alpha-D-xylose = alpha-D-xylulofuranose. This Arthrobacter sp. (strain FB24) protein is Xylose isomerase.